The primary structure comprises 338 residues: METTLQLYSNTPHPQAQYWSVCKVEALFETPFLELVHRAAIVHREHFNPQAVQLSTLMSIKTGGCPEDCGYCPQSARYRTGVQKQALLEVEDIVEKAKIAKSRGASRFCMGAAWRGPKPKDIGKITEIVKAVKDLGLETCGTFGLLEDGMAENLKEAGLDYYNHNIDTSPEHYKKVIGTRGFEDRLSTLGKVRKAGLKVCCGGIIGMNENRKERAGFIASLANLDPQPESVPINQLVKVDGTPLADAEELDWTEFVRTIAVARITMPKSYVRLSAGRQGMSEEMQAMCFMAGANSIFYGDKLLVTGNAEEDRDQLLMAKLDLEPETAENRRVSVQPER.

Residues 50–277 form the Radical SAM core domain; the sequence is QAVQLSTLMS…KSYVRLSAGR (228 aa). Positions 65, 69, and 72 each coordinate [4Fe-4S] cluster. Residues cysteine 109, cysteine 140, cysteine 200, and arginine 272 each coordinate [2Fe-2S] cluster.

The protein belongs to the radical SAM superfamily. Biotin synthase family. Homodimer. The cofactor is [4Fe-4S] cluster. Requires [2Fe-2S] cluster as cofactor.

It carries out the reaction (4R,5S)-dethiobiotin + (sulfur carrier)-SH + 2 reduced [2Fe-2S]-[ferredoxin] + 2 S-adenosyl-L-methionine = (sulfur carrier)-H + biotin + 2 5'-deoxyadenosine + 2 L-methionine + 2 oxidized [2Fe-2S]-[ferredoxin]. It functions in the pathway cofactor biosynthesis; biotin biosynthesis; biotin from 7,8-diaminononanoate: step 2/2. Catalyzes the conversion of dethiobiotin (DTB) to biotin by the insertion of a sulfur atom into dethiobiotin via a radical-based mechanism. This chain is Biotin synthase, found in Actinobacillus succinogenes (strain ATCC 55618 / DSM 22257 / CCUG 43843 / 130Z).